A 278-amino-acid polypeptide reads, in one-letter code: HTH-type transcriptional regulator ExsA (278 aa).

The HTH araC/xylS-type domain occupies E171–G269. 2 consecutive DNA-binding regions (H-T-H motif) follow at residues S188–Y209 and I236–F259.

As to quaternary structure, homodimer. Interacts with ExsD; this interaction inhibits ExsA activity.

With respect to regulation, in the absence of inducing signals such as low Ca(2+) or host cell contact, the T3SS/injectisome is expressed at a low basal level and exists in a quiescent state due to ExsA sequestration by ExsD in a 1:1 complex. Upon host cell contact, this interaction is disrupted by the anti-antiactivator protein ExsC leading to ExsA activation. Functionally, transcriptional regulator that plays an essential role in the activation the type III secretion system (T3SS) operons. In addition, ExsA directly regulates the transcription of ImpA virulence factor that cooperatively inhibits the functions of host macrophages together with the T3SS. This chain is HTH-type transcriptional regulator ExsA (exsA), found in Pseudomonas aeruginosa (strain ATCC 15692 / DSM 22644 / CIP 104116 / JCM 14847 / LMG 12228 / 1C / PRS 101 / PAO1).